A 569-amino-acid polypeptide reads, in one-letter code: Hemin/hemoglobin-binding protein 2 (569 aa).

The first 28 residues, 1–28, serve as a signal peptide directing secretion; that stretch reads MKKLWKKGLVAFLALTLIFQLIPGFASA. 3 consecutive NEAT domains span residues 34-173, 184-307, and 360-484; these read KDGG…FKVI, LSDG…ATAA, and LNNH…IKDI. Residues 204-205, Y280, and Y289 contribute to the heme site; that span reads SS. A disordered region spans residues 307–357; that stretch reads ASSYPGSDETPPVVNPGETNPPVTKPDPGTTNPPVTTPPTTPSKPAVVDPK. The span at 502–511 shows a compositional bias: polar residues; the sequence is TGNVASNNNA. Residues 502 to 537 are disordered; the sequence is TGNVASNNNAGPKLAKPDFDDTNSVQKTASKTEKNA. An NXZTN sorting signal motif is present at residues 536–540; the sequence is NAKTN. Residue T539 is modified to Pentaglycyl murein peptidoglycan amidated threonine. Positions 540-569 are cleaved as a propeptide — removed by sortase B; it reads NDSSSMVWYITLFGASFLYLAYRLKRKRLS.

It localises to the cell surface. Its subcellular location is the secreted. It is found in the cell wall. With respect to regulation, is overexpressed in mecA, clpC and clpP mutants, suggesting the protein level is controlled by MecA, ClpC and ClpP (at protein level). Acts as an extracellular and cell wall-bound hemophore; scavenges host heme and hemoglobin from the environment and also serves as a cell wall receptor for both. At low hemin (Hn) and hemoglobin (Hb) concentrations adsorbs Hn/Hb and presumably directs it to membrane transporters. Soluble Hbp2 can probably pass Hn/Hb to cell wall-anchored Hbp2, and both forms can accept Hn/Hb from Hbp1. May be involved in crossing the digestive barrier in infected animals. Binds host hemin. Binds host hemoglobin with affinity in the nanomolar range. This Listeria monocytogenes serovar 1/2a (strain ATCC BAA-679 / EGD-e) protein is Hemin/hemoglobin-binding protein 2.